Reading from the N-terminus, the 175-residue chain is NADH-ubiquinone oxidoreductase chain 6 (175 aa).

5 consecutive transmembrane segments (helical) span residues 1–21 (MMYTVFVMSVLFVVGFVGVSS), 24–44 (SPVYGGLGLVASGGVGCGIVV), 46–66 (FGGSFLGLMVFLVYLGGMMVV), 86–106 (IVVLGALVGGLLMEGAAVVYL), and 149–169 (YGCWFMVMSGWMLFISVFIVI).

It belongs to the complex I subunit 6 family. In terms of assembly, core subunit of respiratory chain NADH dehydrogenase (Complex I) which is composed of 45 different subunits.

It localises to the mitochondrion inner membrane. It catalyses the reaction a ubiquinone + NADH + 5 H(+)(in) = a ubiquinol + NAD(+) + 4 H(+)(out). In terms of biological role, core subunit of the mitochondrial membrane respiratory chain NADH dehydrogenase (Complex I) which catalyzes electron transfer from NADH through the respiratory chain, using ubiquinone as an electron acceptor. Essential for the catalytic activity and assembly of complex I. The polypeptide is NADH-ubiquinone oxidoreductase chain 6 (MT-ND6) (Dugong dugon (Dugong)).